The following is a 629-amino-acid chain: Arginine--tRNA ligase (629 aa).

A 'HIGH' region motif is present at residues 128–138 (VNPTKPLHMGH).

Belongs to the class-I aminoacyl-tRNA synthetase family.

Its subcellular location is the cytoplasm. The catalysed reaction is tRNA(Arg) + L-arginine + ATP = L-arginyl-tRNA(Arg) + AMP + diphosphate. This chain is Arginine--tRNA ligase (argS), found in Pyrococcus horikoshii (strain ATCC 700860 / DSM 12428 / JCM 9974 / NBRC 100139 / OT-3).